Reading from the N-terminus, the 366-residue chain is Major outer membrane protein (366 aa).

The first 21 residues, 1 to 21 (MKKTLLATAIAGAMAASGAQA), serve as a signal peptide directing secretion.

The protein belongs to the Gram-negative porin family. In terms of assembly, homotrimer.

It localises to the cell outer membrane. This is Major outer membrane protein from Halomonas elongata (strain ATCC 33173 / DSM 2581 / NBRC 15536 / NCIMB 2198 / 1H9).